The following is a 127-amino-acid chain: Membrane-bound lysozyme inhibitor of C-type lysozyme (127 aa).

The N-terminal stretch at 1–18 is a signal peptide; that stretch reads MKKALWLLLAAVPVVLVA. Cys-19 carries N-palmitoyl cysteine lipidation. A lipid anchor (S-diacylglycerol cysteine) is attached at Cys-19. Cys-51 and Cys-124 are disulfide-bonded.

Belongs to the MliC family. Type 2 subfamily. Homodimer.

Its subcellular location is the cell outer membrane. Functionally, specifically inhibits C-type lysozymes. This chain is Membrane-bound lysozyme inhibitor of C-type lysozyme, found in Pseudomonas aeruginosa (strain ATCC 15692 / DSM 22644 / CIP 104116 / JCM 14847 / LMG 12228 / 1C / PRS 101 / PAO1).